The chain runs to 96 residues: MKIAITITVLMLSICCSSASSDICPGFLQVLEALLLGSESNYEAALKPFNPASDLQNAGTQLKRLVDTLPQETRINIVKLTEKILTSPLCEQDLRV.

The N-terminal stretch at 1 to 19 is a signal peptide; that stretch reads MKIAITITVLMLSICCSSA.

The protein belongs to the secretoglobin family. As to quaternary structure, antiparallel homodimer; disulfide-linked. Interaction with LMBR1L is controversial. Club cells (nonciliated cells of the surface epithelium of the pulmonary airways).

It is found in the secreted. Its function is as follows. Binds phosphatidylcholine, phosphatidylinositol, polychlorinated biphenyls (PCB) and weakly progesterone, potent inhibitor of phospholipase A2. This Rattus norvegicus (Rat) protein is Uteroglobin (Scgb1a1).